The primary structure comprises 375 residues: Chaperone protein DnaJ (375 aa).

The J domain occupies 5 to 69; sequence DYYEVLGVGK…QKRAHYDQFG (65 aa). Residues 132 to 214 form a CR-type zinc finger; the sequence is GKETTIEIPR…CGGTGKVKKR (83 aa). Zn(2+) contacts are provided by Cys-145, Cys-148, Cys-162, Cys-165, Cys-188, Cys-191, Cys-202, and Cys-205. 4 CXXCXGXG motif repeats span residues 145–152, 162–169, 188–195, and 202–209; these read CETCSGSG, CSHCGGSG, CHYCNGTG, and CSTCGGTG.

The protein belongs to the DnaJ family. As to quaternary structure, homodimer. It depends on Zn(2+) as a cofactor.

The protein resides in the cytoplasm. Functionally, participates actively in the response to hyperosmotic and heat shock by preventing the aggregation of stress-denatured proteins and by disaggregating proteins, also in an autonomous, DnaK-independent fashion. Unfolded proteins bind initially to DnaJ; upon interaction with the DnaJ-bound protein, DnaK hydrolyzes its bound ATP, resulting in the formation of a stable complex. GrpE releases ADP from DnaK; ATP binding to DnaK triggers the release of the substrate protein, thus completing the reaction cycle. Several rounds of ATP-dependent interactions between DnaJ, DnaK and GrpE are required for fully efficient folding. Also involved, together with DnaK and GrpE, in the DNA replication of plasmids through activation of initiation proteins. This is Chaperone protein DnaJ from Bacillus licheniformis (strain ATCC 14580 / DSM 13 / JCM 2505 / CCUG 7422 / NBRC 12200 / NCIMB 9375 / NCTC 10341 / NRRL NRS-1264 / Gibson 46).